Consider the following 147-residue polypeptide: Methylated-DNA--protein-cysteine methyltransferase (147 aa).

Cys112 serves as the catalytic Nucleophile; methyl group acceptor.

This sequence belongs to the MGMT family.

It is found in the cytoplasm. The catalysed reaction is a 6-O-methyl-2'-deoxyguanosine in DNA + L-cysteinyl-[protein] = S-methyl-L-cysteinyl-[protein] + a 2'-deoxyguanosine in DNA. It carries out the reaction a 4-O-methyl-thymidine in DNA + L-cysteinyl-[protein] = a thymidine in DNA + S-methyl-L-cysteinyl-[protein]. Functionally, involved in the cellular defense against the biological effects of O6-methylguanine (O6-MeG) and O4-methylthymine (O4-MeT) in DNA. Repairs the methylated nucleobase in DNA by stoichiometrically transferring the methyl group to a cysteine residue in the enzyme. This is a suicide reaction: the enzyme is irreversibly inactivated. This is Methylated-DNA--protein-cysteine methyltransferase from Archaeoglobus fulgidus (strain ATCC 49558 / DSM 4304 / JCM 9628 / NBRC 100126 / VC-16).